The sequence spans 300 residues: MKIYILGAGAIGSLFGGLLANAGEDVLLIGRDPHVSAINEKGLKIVGIKDLNVKVEATTRVPEEKPDLIVLATKSYSTIEALKSARHIVKGSWVLSIQNGIGNEDKIIEFGGKAIGGITTNGAMVEAPGVIKWTGKGVTIIGLYPQGKEKFIEKVADVFNSADIETHVSENIISWIWAKAIVNSAINPIGTLLEVKNKVIRENDFLLSMAMEVVKEGCRVALQNGIEFDVPPMDLFFQTLEQTRENYNSMLQDIWRGKKTEVDYINGKIVEYAKAVNLEAPMNLLLWGLIKGKEALEGKK.

Residues 7–12 (GAGAIG), lysine 74, asparagine 99, and alanine 123 contribute to the NADP(+) site. Lysine 179 functions as the Proton donor in the catalytic mechanism. Substrate is bound by residues lysine 179, asparagine 183, asparagine 187, asparagine 197, and 246–249 (NYNS). Position 261 (glutamate 261) interacts with NADP(+).

The protein belongs to the ketopantoate reductase family.

It is found in the cytoplasm. The enzyme catalyses (R)-pantoate + NAD(+) = 2-dehydropantoate + NADH + H(+). It catalyses the reaction (R)-pantoate + NADP(+) = 2-dehydropantoate + NADPH + H(+). The protein operates within cofactor biosynthesis; coenzyme A biosynthesis. In terms of biological role, catalyzes the NAD(P)H-dependent reduction of ketopantoate into pantoic acid. This is 2-dehydropantoate 2-reductase (apbA) from Pyrococcus abyssi (strain GE5 / Orsay).